The chain runs to 497 residues: Nuclear pore complex protein npp-16 (497 aa).

3 disordered regions span residues 76–95, 210–308, and 359–379; these read VPRR…APRK, TKKS…SAPK, and MENQ…GEYV. 2 stretches are compositionally biased toward basic and acidic residues: residues 231-240 and 250-260; these read KDGDKPKETP and KPAEPSEEPKA. Residues 390–497 form a ranBD1 region; sequence EPDAVLSSKV…FTDKILEVAV (108 aa).

In terms of assembly, interacts with importin beta imb-1. Interacts with DNA-directed RNA polymerase III subunit rpc-1. Interacts with TATA-box-binding protein tbp-1. Interacts with GTF3C5 homolog tftc-5. Interacts with GTF3C3 homolog tftc-3.

The protein localises to the nucleus. It is found in the nuclear pore complex. It localises to the nucleus membrane. Its function is as follows. Component of the nuclear pore complex. Plays a direct role in nuclear protein import. Required for anoxia-induced prophase arrest; may function in concert with cdk-1 to arrest prophase blastomeres in response to anoxia. The chain is Nuclear pore complex protein npp-16 from Caenorhabditis elegans.